Reading from the N-terminus, the 156-residue chain is Flagellar assembly factor FliW (156 aa).

This sequence belongs to the FliW family. As to quaternary structure, interacts with translational regulator CsrA and flagellin(s).

The protein localises to the cytoplasm. Acts as an anti-CsrA protein, binds CsrA and prevents it from repressing translation of its target genes, one of which is flagellin. Binds to flagellin and participates in the assembly of the flagellum. This is Flagellar assembly factor FliW from Pseudothermotoga lettingae (strain ATCC BAA-301 / DSM 14385 / NBRC 107922 / TMO) (Thermotoga lettingae).